Consider the following 371-residue polypeptide: Zinc finger CCCH domain-containing protein 21 (371 aa).

The interval 1–64 (MPPKQQPKAD…AAKKKKEEEK (64 aa)) is disordered. Basic and acidic residues predominate over residues 10 to 23 (DLAKKQKQVEDKTF). The segment covering 34–46 (VQKYVQSLKQSVQ) has biased composition (polar residues). 2 C3H1-type zinc fingers span residues 88–115 (DPKS…HDLN) and 159–197 (KPTD…HALP). Coiled coils occupy residues 205-237 (QMKA…ATQM) and 283-317 (FVDD…GTSK). Residues 290 to 371 (CEEYEREREQ…IREPNDEGSS (82 aa)) are disordered. The segment covering 292–312 (EYEREREQEETEQKAKNKEAE) has biased composition (basic and acidic residues). The span at 330-352 (NEEEEDDDDDDDDLDMDELDELE) shows a compositional bias: acidic residues.

The chain is Zinc finger CCCH domain-containing protein 21 from Arabidopsis thaliana (Mouse-ear cress).